The sequence spans 448 residues: Tubulin beta chain (448 aa).

GTP is bound by residues glutamine 11, glutamate 69, serine 138, glycine 142, threonine 143, glycine 144, asparagine 204, and asparagine 226. Glutamate 69 contacts Mg(2+). A disordered region spans residues 429–448 (SISDGEEQPYAEEAAYEAEE). The span at 432 to 448 (DGEEQPYAEEAAYEAEE) shows a compositional bias: acidic residues.

This sequence belongs to the tubulin family. As to quaternary structure, dimer of alpha and beta chains. A typical microtubule is a hollow water-filled tube with an outer diameter of 25 nm and an inner diameter of 15 nM. Alpha-beta heterodimers associate head-to-tail to form protofilaments running lengthwise along the microtubule wall with the beta-tubulin subunit facing the microtubule plus end conferring a structural polarity. Microtubules usually have 13 protofilaments but different protofilament numbers can be found in some organisms and specialized cells. The cofactor is Mg(2+).

Its subcellular location is the cytoplasm. It is found in the cytoskeleton. Tubulin is the major constituent of microtubules, a cylinder consisting of laterally associated linear protofilaments composed of alpha- and beta-tubulin heterodimers. Microtubules grow by the addition of GTP-tubulin dimers to the microtubule end, where a stabilizing cap forms. Below the cap, tubulin dimers are in GDP-bound state, owing to GTPase activity of alpha-tubulin. In Aspergillus fumigatus (strain ATCC MYA-4609 / CBS 101355 / FGSC A1100 / Af293) (Neosartorya fumigata), this protein is Tubulin beta chain.